A 357-amino-acid polypeptide reads, in one-letter code: tRNA-specific 2-thiouridylase MnmA (357 aa).

ATP is bound by residues Ala-7 to Ser-14 and Met-33. The Nucleophile role is filled by Cys-101. Cys-101 and Cys-198 are disulfide-bonded. Gly-125 lines the ATP pocket. Residues Lys-148–Gln-150 form an interaction with tRNA region. Residue Cys-198 is the Cysteine persulfide intermediate of the active site.

Belongs to the MnmA/TRMU family.

It localises to the cytoplasm. The catalysed reaction is S-sulfanyl-L-cysteinyl-[protein] + uridine(34) in tRNA + AH2 + ATP = 2-thiouridine(34) in tRNA + L-cysteinyl-[protein] + A + AMP + diphosphate + H(+). Functionally, catalyzes the 2-thiolation of uridine at the wobble position (U34) of tRNA, leading to the formation of s(2)U34. In Herpetosiphon aurantiacus (strain ATCC 23779 / DSM 785 / 114-95), this protein is tRNA-specific 2-thiouridylase MnmA.